The sequence spans 148 residues: Large ribosomal subunit protein bL9 (148 aa).

Belongs to the bacterial ribosomal protein bL9 family.

In terms of biological role, binds to the 23S rRNA. The polypeptide is Large ribosomal subunit protein bL9 (Pseudomonas putida (strain ATCC 700007 / DSM 6899 / JCM 31910 / BCRC 17059 / LMG 24140 / F1)).